We begin with the raw amino-acid sequence, 165 residues long: Nucleotide-binding protein SYNW1816 (165 aa).

It belongs to the YajQ family.

Nucleotide-binding protein. This is Nucleotide-binding protein SYNW1816 from Parasynechococcus marenigrum (strain WH8102).